A 181-amino-acid chain; its full sequence is Large ribosomal subunit protein uL5c (181 aa).

Belongs to the universal ribosomal protein uL5 family. In terms of assembly, part of the 50S ribosomal subunit; contacts the 5S rRNA.

It is found in the plastid. It localises to the chloroplast. Functionally, binds 5S rRNA, forms part of the central protuberance of the 50S subunit. The chain is Large ribosomal subunit protein uL5c (rpl5) from Rhodomonas salina (Cryptomonas salina).